A 356-amino-acid polypeptide reads, in one-letter code: Gluconolactonase (356 aa).

Residues 1–35 constitute a signal peptide (tat-type signal); sequence MTTGRMSRRECLSAAVMVPIAAMTATATITGSAQA.

In terms of assembly, homodimer. In terms of processing, predicted to be exported by the Tat system. The position of the signal peptide cleavage has been experimentally proven.

It is found in the periplasm. The enzyme catalyses D-glucono-1,5-lactone + H2O = D-gluconate + H(+). It participates in carbohydrate acid metabolism; D-gluconate biosynthesis; D-gluconate from D-glucono-1,5-lactone: step 1/1. In terms of biological role, hydrolyzes the gluconolactone formed by glucose-fructose oxidoreductase, and that formed in aerobic conditions by the glucose dehydrogenase present. The protein is Gluconolactonase (gnl) of Zymomonas mobilis subsp. mobilis (strain ATCC 31821 / ZM4 / CP4).